Reading from the N-terminus, the 294-residue chain is ATP phosphoribosyltransferase (294 aa).

The protein belongs to the ATP phosphoribosyltransferase family. Long subfamily. Mg(2+) serves as cofactor.

Its subcellular location is the cytoplasm. It carries out the reaction 1-(5-phospho-beta-D-ribosyl)-ATP + diphosphate = 5-phospho-alpha-D-ribose 1-diphosphate + ATP. The protein operates within amino-acid biosynthesis; L-histidine biosynthesis; L-histidine from 5-phospho-alpha-D-ribose 1-diphosphate: step 1/9. With respect to regulation, feedback inhibited by histidine. Catalyzes the condensation of ATP and 5-phosphoribose 1-diphosphate to form N'-(5'-phosphoribosyl)-ATP (PR-ATP). Has a crucial role in the pathway because the rate of histidine biosynthesis seems to be controlled primarily by regulation of HisG enzymatic activity. In Chlorobium chlorochromatii (strain CaD3), this protein is ATP phosphoribosyltransferase.